Reading from the N-terminus, the 956-residue chain is GAS2-like protein 2B (956 aa).

The region spanning 23–150 is the Calponin-homology (CH) domain; sequence YAMKEDLAEW…CLLELARRAS (128 aa). In terms of domain architecture, GAR spans 191-263; the sequence is CDFKNLDQMV…HYLDKHDPCH (73 aa). Polar residues-rich tracts occupy residues 332–353 and 381–390; these read SSSY…QTPP and DPQQLGNPQS. Disordered stretches follow at residues 332–361, 378–406, 853–885, and 914–956; these read SSSY…SMSI, DTQD…ASQL, RPKI…SRNN, and VNSE…ESWV. Basic and acidic residues predominate over residues 859–868; sequence RRDNRPEKKP.

It belongs to the GAS2 family.

The protein localises to the cytoplasm. The protein resides in the cytoskeleton. Its subcellular location is the cilium basal body. Together with gas2l2.L, regulates ciliary orientation and performance. The protein is GAS2-like protein 2B of Xenopus laevis (African clawed frog).